We begin with the raw amino-acid sequence, 343 residues long: Probable dolichyl-diphosphooligosaccharide--protein glycosyltransferase subunit 3A (343 aa).

The signal sequence occupies residues methionine 1–alanine 22. Residues asparagine 23–leucine 185 are Lumenal-facing. N-linked (GlcNAc...) asparagine glycosylation is found at asparagine 105, asparagine 108, and asparagine 146. Residues isoleucine 186 to isoleucine 206 form a helical membrane-spanning segment. Topologically, residues lysine 207–arginine 220 are cytoplasmic. A helical transmembrane segment spans residues isoleucine 221 to isoleucine 241. At isoleucine 242–glycine 273 the chain is on the lumenal side. Residues phenylalanine 274–valine 294 traverse the membrane as a helical segment. The Cytoplasmic segment spans residues valine 295–arginine 304. Residues methionine 305–aspartate 325 traverse the membrane as a helical segment. At asparagine 326–glycine 343 the chain is on the lumenal side.

This sequence belongs to the OST3/OST6 family. As to quaternary structure, component of the oligosaccharyltransferase (OST) complex.

Its subcellular location is the endoplasmic reticulum membrane. In terms of biological role, subunit of the oligosaccharyl transferase (OST) complex that catalyzes the initial transfer of a defined glycan (Glc(3)Man(9)GlcNAc(2) in eukaryotes) from the lipid carrier dolichol-pyrophosphate to an asparagine residue within an Asn-X-Ser/Thr consensus motif in nascent polypeptide chains, the first step in protein N-glycosylation. N-glycosylation occurs cotranslationally and the complex associates with the Sec61 complex at the channel-forming translocon complex that mediates protein translocation across the endoplasmic reticulum (ER). All subunits are required for a maximal enzyme activity. The polypeptide is Probable dolichyl-diphosphooligosaccharide--protein glycosyltransferase subunit 3A (OST3A) (Arabidopsis thaliana (Mouse-ear cress)).